Reading from the N-terminus, the 220-residue chain is Large ribosomal subunit protein eL15 (220 aa).

The span at 197-207 (KKRHEASRGAR) shows a compositional bias: basic and acidic residues. Residues 197 to 220 (KKRHEASRGARDPWQIAEKLKEEK) form a disordered region.

It belongs to the eukaryotic ribosomal protein eL15 family.

This is Large ribosomal subunit protein eL15 from Desulfurococcus amylolyticus (strain DSM 18924 / JCM 16383 / VKM B-2413 / 1221n) (Desulfurococcus kamchatkensis).